The sequence spans 1406 residues: DNA-directed RNA polymerase subunit beta' (1406 aa).

Zn(2+) contacts are provided by C70, C72, C85, and C88. Residues D460, D462, and D464 each coordinate Mg(2+). Zn(2+)-binding residues include C814, C889, C896, and C899.

This sequence belongs to the RNA polymerase beta' chain family. In terms of assembly, the RNAP catalytic core consists of 2 alpha, 1 beta, 1 beta' and 1 omega subunit. When a sigma factor is associated with the core the holoenzyme is formed, which can initiate transcription. The cofactor is Mg(2+). Zn(2+) serves as cofactor.

The enzyme catalyses RNA(n) + a ribonucleoside 5'-triphosphate = RNA(n+1) + diphosphate. Its function is as follows. DNA-dependent RNA polymerase catalyzes the transcription of DNA into RNA using the four ribonucleoside triphosphates as substrates. The polypeptide is DNA-directed RNA polymerase subunit beta' (Psychromonas ingrahamii (strain DSM 17664 / CCUG 51855 / 37)).